The primary structure comprises 282 residues: Probable porphobilinogen deaminase (282 aa).

Cys-233 carries the post-translational modification S-(dipyrrolylmethanemethyl)cysteine.

The protein belongs to the HMBS family. Dipyrromethane serves as cofactor.

The enzyme catalyses 4 porphobilinogen + H2O = hydroxymethylbilane + 4 NH4(+). Its pathway is porphyrin-containing compound metabolism; protoporphyrin-IX biosynthesis; coproporphyrinogen-III from 5-aminolevulinate: step 2/4. Functionally, tetrapolymerization of the monopyrrole PBG into the hydroxymethylbilane pre-uroporphyrinogen in several discrete steps. The chain is Probable porphobilinogen deaminase from Picrophilus torridus (strain ATCC 700027 / DSM 9790 / JCM 10055 / NBRC 100828 / KAW 2/3).